The primary structure comprises 571 residues: Proline--tRNA ligase (571 aa).

The protein belongs to the class-II aminoacyl-tRNA synthetase family. ProS type 1 subfamily. In terms of assembly, homodimer.

It is found in the cytoplasm. The enzyme catalyses tRNA(Pro) + L-proline + ATP = L-prolyl-tRNA(Pro) + AMP + diphosphate. Catalyzes the attachment of proline to tRNA(Pro) in a two-step reaction: proline is first activated by ATP to form Pro-AMP and then transferred to the acceptor end of tRNA(Pro). As ProRS can inadvertently accommodate and process non-cognate amino acids such as alanine and cysteine, to avoid such errors it has two additional distinct editing activities against alanine. One activity is designated as 'pretransfer' editing and involves the tRNA(Pro)-independent hydrolysis of activated Ala-AMP. The other activity is designated 'posttransfer' editing and involves deacylation of mischarged Ala-tRNA(Pro). The misacylated Cys-tRNA(Pro) is not edited by ProRS. This chain is Proline--tRNA ligase, found in Thermodesulfovibrio yellowstonii (strain ATCC 51303 / DSM 11347 / YP87).